A 122-amino-acid polypeptide reads, in one-letter code: Large ribosomal subunit protein uL14c (122 aa).

Belongs to the universal ribosomal protein uL14 family. As to quaternary structure, part of the 50S ribosomal subunit.

The protein localises to the plastid. It localises to the chloroplast. Functionally, binds to 23S rRNA. The polypeptide is Large ribosomal subunit protein uL14c (Acorus calamus (Sweet flag)).